Reading from the N-terminus, the 326-residue chain is Probable cell division protein WhiA (326 aa).

The H-T-H motif DNA-binding region spans 275–308 (SLEELGALADPPLTKDAIAGRIRRLLALADKRAR).

It belongs to the WhiA family.

Functionally, involved in cell division and chromosome segregation. This is Probable cell division protein WhiA from Salinispora arenicola (strain CNS-205).